Reading from the N-terminus, the 346-residue chain is Histidinol-phosphate aminotransferase (346 aa).

Lys209 carries the N6-(pyridoxal phosphate)lysine modification.

The protein belongs to the class-II pyridoxal-phosphate-dependent aminotransferase family. Histidinol-phosphate aminotransferase subfamily. As to quaternary structure, homodimer. Pyridoxal 5'-phosphate is required as a cofactor.

The enzyme catalyses L-histidinol phosphate + 2-oxoglutarate = 3-(imidazol-4-yl)-2-oxopropyl phosphate + L-glutamate. It participates in amino-acid biosynthesis; L-histidine biosynthesis; L-histidine from 5-phospho-alpha-D-ribose 1-diphosphate: step 7/9. In Vibrio cholerae serotype O1 (strain ATCC 39541 / Classical Ogawa 395 / O395), this protein is Histidinol-phosphate aminotransferase.